A 149-amino-acid chain; its full sequence is SsrA-binding protein (149 aa).

This sequence belongs to the SmpB family.

It is found in the cytoplasm. Its function is as follows. Required for rescue of stalled ribosomes mediated by trans-translation. Binds to transfer-messenger RNA (tmRNA), required for stable association of tmRNA with ribosomes. tmRNA and SmpB together mimic tRNA shape, replacing the anticodon stem-loop with SmpB. tmRNA is encoded by the ssrA gene; the 2 termini fold to resemble tRNA(Ala) and it encodes a 'tag peptide', a short internal open reading frame. During trans-translation Ala-aminoacylated tmRNA acts like a tRNA, entering the A-site of stalled ribosomes, displacing the stalled mRNA. The ribosome then switches to translate the ORF on the tmRNA; the nascent peptide is terminated with the 'tag peptide' encoded by the tmRNA and targeted for degradation. The ribosome is freed to recommence translation, which seems to be the essential function of trans-translation. This is SsrA-binding protein from Acholeplasma laidlawii (strain PG-8A).